Consider the following 295-residue polypeptide: MAGMKEIRGKIKSVQNTRKITKAMEMVAASKMRRAQERMRAARPYADKVRDIAAHMSSATPEYRHPFMVSNEGAKSTGFILVTTDKGLCGGMNTNVLRATLQKFKELEGQGKTVEATAIGGKGLGFLNRLRAKVVSNVVQLGDTPHLEKLIGAVKVQLDMYSEGKVSAVYLAYTRFVNTMKQEPVIEQLLPLSTEQFEAKDDKDSPTPNTSWDYIYEPDAQTVVDELLVRYVEALVYQAVAENMASEQSARMVAMKAASDNAKTVINELQLSYNKSRQAAITKELSEIVGGAAAV.

This sequence belongs to the ATPase gamma chain family. As to quaternary structure, F-type ATPases have 2 components, CF(1) - the catalytic core - and CF(0) - the membrane proton channel. CF(1) has five subunits: alpha(3), beta(3), gamma(1), delta(1), epsilon(1). CF(0) has three main subunits: a, b and c.

It is found in the cell inner membrane. In terms of biological role, produces ATP from ADP in the presence of a proton gradient across the membrane. The gamma chain is believed to be important in regulating ATPase activity and the flow of protons through the CF(0) complex. The polypeptide is ATP synthase gamma chain (Paraburkholderia phymatum (strain DSM 17167 / CIP 108236 / LMG 21445 / STM815) (Burkholderia phymatum)).